The chain runs to 324 residues: NADH-quinone oxidoreductase subunit H (324 aa).

The next 8 helical transmembrane spans lie at 11 to 31 (ILIT…CGAF), 81 to 101 (VIFT…FAIV), 114 to 134 (IGIL…LFAG), 154 to 174 (VSYE…AGSF), 186 to 206 (LWNV…GVAV), 237 to 257 (FFVG…TLFF), 265 to 285 (LPPF…FILI), and 304 to 324 (VCLP…LYNA).

The protein belongs to the complex I subunit 1 family. NDH-1 is composed of 13 different subunits. Subunits NuoA, H, J, K, L, M, N constitute the membrane sector of the complex.

The protein resides in the cell inner membrane. The enzyme catalyses a quinone + NADH + 5 H(+)(in) = a quinol + NAD(+) + 4 H(+)(out). NDH-1 shuttles electrons from NADH, via FMN and iron-sulfur (Fe-S) centers, to quinones in the respiratory chain. The immediate electron acceptor for the enzyme in this species is believed to be ubiquinone. Couples the redox reaction to proton translocation (for every two electrons transferred, four hydrogen ions are translocated across the cytoplasmic membrane), and thus conserves the redox energy in a proton gradient. This subunit may bind ubiquinone. The polypeptide is NADH-quinone oxidoreductase subunit H (Pectobacterium atrosepticum (strain SCRI 1043 / ATCC BAA-672) (Erwinia carotovora subsp. atroseptica)).